Here is a 601-residue protein sequence, read N- to C-terminus: Aspartate--tRNA(Asp/Asn) ligase (601 aa).

An L-aspartate-binding site is contributed by Glu-187. Residues 211-214 are aspartate; the sequence is QQFK. Residues Arg-233 and His-461 each coordinate L-aspartate. ATP is bound at residue 233 to 235; that stretch reads RDE. Glu-495 contacts ATP. Residue Arg-502 participates in L-aspartate binding. 547–550 is a binding site for ATP; sequence GLDR.

Belongs to the class-II aminoacyl-tRNA synthetase family. Type 1 subfamily. Homodimer.

The protein resides in the cytoplasm. It catalyses the reaction tRNA(Asx) + L-aspartate + ATP = L-aspartyl-tRNA(Asx) + AMP + diphosphate. Aspartyl-tRNA synthetase with relaxed tRNA specificity since it is able to aspartylate not only its cognate tRNA(Asp) but also tRNA(Asn). Reaction proceeds in two steps: L-aspartate is first activated by ATP to form Asp-AMP and then transferred to the acceptor end of tRNA(Asp/Asn). This chain is Aspartate--tRNA(Asp/Asn) ligase, found in Pelodictyon phaeoclathratiforme (strain DSM 5477 / BU-1).